The chain runs to 365 residues: Carbamoyl phosphate synthase small chain (365 aa).

CPSase regions lie at residues 1–166 (MKRQ…PSPG) and 1–169 (MKRQ…GRGH). Residues Ser-45, Gly-218, and Gly-220 each coordinate L-glutamine. Positions 170-357 (RVVLVDFGMK…LTMIENFKKE (188 aa)) constitute a Glutamine amidotransferase type-1 domain. The Nucleophile role is filled by Cys-245. Residues Leu-246, Gln-249, Asn-287, Gly-289, and Tyr-290 each coordinate L-glutamine. Active-site residues include His-330 and Glu-332.

Belongs to the CarA family. Composed of two chains; the small (or glutamine) chain promotes the hydrolysis of glutamine to ammonia, which is used by the large (or ammonia) chain to synthesize carbamoyl phosphate. Tetramer of heterodimers (alpha,beta)4.

The enzyme catalyses hydrogencarbonate + L-glutamine + 2 ATP + H2O = carbamoyl phosphate + L-glutamate + 2 ADP + phosphate + 2 H(+). The catalysed reaction is L-glutamine + H2O = L-glutamate + NH4(+). The protein operates within amino-acid biosynthesis; L-arginine biosynthesis; carbamoyl phosphate from bicarbonate: step 1/1. It participates in pyrimidine metabolism; UMP biosynthesis via de novo pathway; (S)-dihydroorotate from bicarbonate: step 1/3. Small subunit of the glutamine-dependent carbamoyl phosphate synthetase (CPSase). CPSase catalyzes the formation of carbamoyl phosphate from the ammonia moiety of glutamine, carbonate, and phosphate donated by ATP, constituting the first step of 2 biosynthetic pathways, one leading to arginine and/or urea and the other to pyrimidine nucleotides. The small subunit (glutamine amidotransferase) binds and cleaves glutamine to supply the large subunit with the substrate ammonia. The protein is Carbamoyl phosphate synthase small chain of Bacillus cereus (strain ZK / E33L).